Reading from the N-terminus, the 776-residue chain is Semaphorin-4F (776 aa).

The N-terminal stretch at Met-1–Gly-39 is a signal peptide. Residues Arg-40–Val-665 lie on the Extracellular side of the membrane. Positions Arg-47 to Thr-515 constitute a Sema domain. Asn-69 carries N-linked (GlcNAc...) asparagine glycosylation. Cys-117 and Cys-127 are disulfide-bonded. N-linked (GlcNAc...) asparagine glycosylation is present at Asn-138. Cystine bridges form between Cys-145–Cys-154, Cys-278–Cys-389, and Cys-302–Cys-348. Asn-514 carries an N-linked (GlcNAc...) asparagine glycan. The region spanning Asn-517–Pro-568 is the PSI domain. 3 disulfides stabilise this stretch: Cys-518-Cys-535, Cys-527-Cys-544, and Cys-592-Cys-633. Positions Val-585–Ala-640 constitute an Ig-like C2-type domain. The helical transmembrane segment at Gly-666–Ile-686 threads the bilayer. Over Gly-687–Ile-776 the chain is Cytoplasmic. A disordered region spans residues Asp-702–Ser-741. Phosphoserine is present on residues Ser-724 and Ser-726. The short motif at Thr-774–Ile-776 is the PDZ-binding element.

The protein belongs to the semaphorin family. As to quaternary structure, interacts (via PDZ-binding motif) with DLG4/SAP90 (via PDZ domain 2); this interaction may promote translocation of DLG4/SAP90 to the membrane. As to expression, expressed at low levels in the developing embryo. Expressed at high levels in the lung and adult central nervous system, including the dorsal root ganglia.

Its subcellular location is the cell membrane. It is found in the postsynaptic density. The protein resides in the perikaryon. It localises to the cell projection. The protein localises to the dendrite. In terms of biological role, probable cell surface receptor that regulates oligodendroglial precursor cell migration. Might also regulate differentiation of oligodendroglial precursor cells. Has growth cone collapse activity against retinal ganglion-cell axons. The chain is Semaphorin-4F (Sema4f) from Rattus norvegicus (Rat).